Here is a 235-residue protein sequence, read N- to C-terminus: Large ribosomal subunit protein uL1 (235 aa).

It belongs to the universal ribosomal protein uL1 family. As to quaternary structure, part of the 50S ribosomal subunit.

Binds directly to 23S rRNA. The L1 stalk is quite mobile in the ribosome, and is involved in E site tRNA release. In terms of biological role, protein L1 is also a translational repressor protein, it controls the translation of the L11 operon by binding to its mRNA. In Methylibium petroleiphilum (strain ATCC BAA-1232 / LMG 22953 / PM1), this protein is Large ribosomal subunit protein uL1.